The primary structure comprises 297 residues: Thoeris protein ThsA (297 aa).

Helical transmembrane passes span 32 to 52 and 57 to 77; these read ALSI…FLDL and RLII…VQFI.

It localises to the cell membrane. Its activity is regulated as follows. Activated by a signal molecule generated by ThsB. In terms of biological role, probable membrane protein component of the Thoeris antiviral defense system, composed of ThsA and ThsB. Expression of ThsA and ThsB in B.subtilis (strain BEST7003) confers resistance to phages SBSphiC, SBSphiJ and SPO1. Activation by a signal generated by ThsB leads to phage resistance. The chain is Thoeris protein ThsA from Bacillus amyloliquefaciens (strain Y2) (Bacillus amyloliquefaciens subsp. plantarum (strain B9601-Y2)).